The primary structure comprises 602 residues: UvrABC system protein C (602 aa).

Positions 17-94 constitute a GIY-YIG domain; sequence TTSGCYKMYS…IKEYKPDYNI (78 aa). Residues 199–234 form the UVR domain; sequence SKLLDETEIKMKEAIKKEDFEAAIKLKETKRSLIEI.

The protein belongs to the UvrC family. In terms of assembly, interacts with UvrB in an incision complex.

It localises to the cytoplasm. The UvrABC repair system catalyzes the recognition and processing of DNA lesions. UvrC both incises the 5' and 3' sides of the lesion. The N-terminal half is responsible for the 3' incision and the C-terminal half is responsible for the 5' incision. In Borrelia hermsii (strain HS1 / DAH), this protein is UvrABC system protein C.